The following is a 93-amino-acid chain: Small ribosomal subunit protein uS19 (93 aa).

The protein belongs to the universal ribosomal protein uS19 family.

Protein S19 forms a complex with S13 that binds strongly to the 16S ribosomal RNA. This Lacticaseibacillus paracasei (strain ATCC 334 / BCRC 17002 / CCUG 31169 / CIP 107868 / KCTC 3260 / NRRL B-441) (Lactobacillus paracasei) protein is Small ribosomal subunit protein uS19.